A 113-amino-acid chain; its full sequence is TYRO protein tyrosine kinase-binding protein (113 aa).

The N-terminal stretch at 1 to 27 (MGGLEPCSRLLLLPLLLAVGGLRPVQA) is a signal peptide. Topologically, residues 28-40 (QAQSDCSCSTVSP) are extracellular. The chain crosses the membrane as a helical span at residues 41 to 61 (GVLAGIVLGDLVLTVLIALAV). Aspartate 50 contacts Ca(2+). Topologically, residues 62-113 (YFLGRLVPRGRGAAEAATRKQRITETESPYQELQGQRSDVYSDLNTQRPYYK) are cytoplasmic. Residues 75-113 (AEAATRKQRITETESPYQELQGQRSDVYSDLNTQRPYYK) form a disordered region. The region spanning 80 to 108 (RKQRITETESPYQELQGQRSDVYSDLNTQ) is the ITAM domain. Polar residues predominate over residues 87–113 (TESPYQELQGQRSDVYSDLNTQRPYYK). Tyrosine 91 and tyrosine 102 each carry phosphotyrosine.

This sequence belongs to the TYROBP family. As to quaternary structure, homodimer; disulfide-linked. Homotrimer; disulfide-linked. Homotetramer; disulfide-linked. Homotrimers and homotetramers form when low levels of partner receptors are available and is competitive with assembly with interacting receptors. They may represent alternative oligomerization states or may be intermediates in the receptor assembly process. Binding of a metal cation aids in homooligomerization through coordination of the metal ion by the subunits of the oligomer. Interacts with TREM1. Interacts with TREM2. Interacts with CLECSF5. Interacts with CD300LB and CD300C2. Interacts with CD300E. Interacts (via ITAM domain) with SYK (via SH2 domains); activates SYK mediating neutrophils and macrophages integrin-mediated activation. Interacts with KLRC2. Interacts with CD300H. Interacts with KLRD1. In terms of processing, following ligand binding by associated receptors, tyrosine phosphorylated in the ITAM domain which leads to activation of additional tyrosine kinases and subsequent cell activation.

The protein resides in the cell membrane. Adapter protein which non-covalently associates with activating receptors found on the surface of a variety of immune cells to mediate signaling and cell activation following ligand binding by the receptors. TYROBP is tyrosine-phosphorylated in the ITAM domain following ligand binding by the associated receptors which leads to activation of additional tyrosine kinases and subsequent cell activation. Also has an inhibitory role in some cells. Non-covalently associates with activating receptors of the CD300 family to mediate cell activation. Also mediates cell activation through association with activating receptors of the CD200R family. Required for neutrophil activation mediated by integrin. Required for the activation of myeloid cells mediated by the CLEC5A/MDL1 receptor. Associates with natural killer (NK) cell receptors such as the KLRD1/KLRC2 heterodimer to mediate NK cell activation. Associates with TREM1 to mediate activation of neutrophils and monocytes. Associates with TREM2 on monocyte-derived dendritic cells to mediate up-regulation of chemokine receptor CCR7 and dendritic cell maturation and survival. Association with TREM2 mediates cytokine-induced formation of multinucleated giant cells which are formed by the fusion of macrophages. Stabilizes the TREM2 C-terminal fragment (TREM2-CTF) produced by TREM2 ectodomain shedding which suppresses the release of pro-inflammatory cytokines. In microglia, required with TREM2 for phagocytosis of apoptotic neurons. Required with ITGAM/CD11B in microglia to control production of microglial superoxide ions which promote the neuronal apoptosis that occurs during brain development. Promotes pro-inflammatory responses in microglia following nerve injury which accelerates degeneration of injured neurons. Positively regulates the expression of the IRAK3/IRAK-M kinase and IL10 production by liver dendritic cells and inhibits their T cell allosimulatory ability. Negatively regulates B cell proliferation. Required for CSF1-mediated osteoclast cytoskeletal organization. Positively regulates multinucleation during osteoclast development. The protein is TYRO protein tyrosine kinase-binding protein of Macaca mulatta (Rhesus macaque).